The following is a 93-amino-acid chain: Small ribosomal subunit protein uS19 (93 aa).

This sequence belongs to the universal ribosomal protein uS19 family.

In terms of biological role, protein S19 forms a complex with S13 that binds strongly to the 16S ribosomal RNA. The protein is Small ribosomal subunit protein uS19 of Ligilactobacillus salivarius (strain UCC118) (Lactobacillus salivarius).